The following is a 227-amino-acid chain: Cytidylate kinase (227 aa).

10 to 18 (GPASSGKST) contributes to the ATP binding site.

Belongs to the cytidylate kinase family. Type 1 subfamily.

Its subcellular location is the cytoplasm. The enzyme catalyses CMP + ATP = CDP + ADP. It catalyses the reaction dCMP + ATP = dCDP + ADP. This chain is Cytidylate kinase, found in Streptococcus mutans serotype c (strain ATCC 700610 / UA159).